The primary structure comprises 312 residues: Malate dehydrogenase (312 aa).

Residues 7–13 (GAAGGIG) and Asp-34 each bind NAD(+). Substrate is bound by residues Arg-81 and Arg-87. NAD(+) is bound by residues Asn-94 and 117–119 (ITN). 2 residues coordinate substrate: Asn-119 and Arg-153. Residue His-177 is the Proton acceptor of the active site. Met-227 contributes to the NAD(+) binding site.

The protein belongs to the LDH/MDH superfamily. MDH type 1 family. Homodimer.

It catalyses the reaction (S)-malate + NAD(+) = oxaloacetate + NADH + H(+). Its function is as follows. Catalyzes the reversible oxidation of malate to oxaloacetate. The polypeptide is Malate dehydrogenase (Salmonella newport (strain SL254)).